The sequence spans 502 residues: Protein nucleotidyltransferase YdiU (502 aa).

Residues Gly-98, Gly-100, Arg-101, Lys-121, Asp-133, Gly-134, Arg-184, and Arg-191 each contribute to the ATP site. Catalysis depends on Asp-260, which acts as the Proton acceptor. Mg(2+)-binding residues include Asn-261 and Asp-270. Asp-270 is a binding site for ATP.

Belongs to the SELO family. Requires Mg(2+) as cofactor. Mn(2+) is required as a cofactor.

It carries out the reaction L-seryl-[protein] + ATP = 3-O-(5'-adenylyl)-L-seryl-[protein] + diphosphate. It catalyses the reaction L-threonyl-[protein] + ATP = 3-O-(5'-adenylyl)-L-threonyl-[protein] + diphosphate. The catalysed reaction is L-tyrosyl-[protein] + ATP = O-(5'-adenylyl)-L-tyrosyl-[protein] + diphosphate. The enzyme catalyses L-histidyl-[protein] + UTP = N(tele)-(5'-uridylyl)-L-histidyl-[protein] + diphosphate. It carries out the reaction L-seryl-[protein] + UTP = O-(5'-uridylyl)-L-seryl-[protein] + diphosphate. It catalyses the reaction L-tyrosyl-[protein] + UTP = O-(5'-uridylyl)-L-tyrosyl-[protein] + diphosphate. Nucleotidyltransferase involved in the post-translational modification of proteins. It can catalyze the addition of adenosine monophosphate (AMP) or uridine monophosphate (UMP) to a protein, resulting in modifications known as AMPylation and UMPylation. This Rhizobium rhizogenes (strain K84 / ATCC BAA-868) (Agrobacterium radiobacter) protein is Protein nucleotidyltransferase YdiU.